The sequence spans 366 residues: GTP cyclohydrolase 1 type 2 homolog (366 aa).

Residues histidine 64, histidine 65, aspartate 102, histidine 326, and glutamate 329 each contribute to the Zn(2+) site.

The protein belongs to the GTP cyclohydrolase I type 2/NIF3 family. As to quaternary structure, homohexamer.

This chain is GTP cyclohydrolase 1 type 2 homolog, found in Staphylococcus aureus (strain COL).